Here is a 148-residue protein sequence, read N- to C-terminus: Deoxyuridine 5'-triphosphate nucleotidohydrolase (148 aa).

Residues 67–69 (RSG), Asn-80, 84–86 (LID), and Met-94 contribute to the substrate site.

This sequence belongs to the dUTPase family. It depends on Mg(2+) as a cofactor.

It carries out the reaction dUTP + H2O = dUMP + diphosphate + H(+). Its pathway is pyrimidine metabolism; dUMP biosynthesis; dUMP from dCTP (dUTP route): step 2/2. This enzyme is involved in nucleotide metabolism: it produces dUMP, the immediate precursor of thymidine nucleotides and it decreases the intracellular concentration of dUTP so that uracil cannot be incorporated into DNA. This chain is Deoxyuridine 5'-triphosphate nucleotidohydrolase, found in Ralstonia nicotianae (strain ATCC BAA-1114 / GMI1000) (Ralstonia solanacearum).